A 488-amino-acid polypeptide reads, in one-letter code: MTFKDLRDFIAQLEQRGALKRIQVPISPVLEMTEVCDRTLRAKGPALLFEKPTGFDMPVLGNLFGTPERVALGMGAEDVGALREIGTLLAQLKEPEPPKGFKDAWAKLPMYRKVLSMAPKVLKDAPCQEVVEEGDDVDLGRLPVQTCWPGDVGPLITWGLTVTRGPNKERQNLGIYRQQVIGRNKVIMRWLSHRGGALDYREWCQKHPGQPYPVAVALGADPATILGAVTPVPDTLSEYAFAGLLRGHRTELVKCRGSDLQVPASAEIVLEGVIHPGEMADEGPYGDHTGYYNEVDRFPVFTVERVTRRQKPIYHSTYTGRPPDEPAILGVALNEVFVPILQKQFPEIVDFYLPPEGCSYRMAVVTMKKQYPGHAKRVMLGVWSFLRQFMYTKFVIVTDDDIDARDWNDVIWAITTRMDPKRDTVMIDNTPIDYLDFASPVSGLGSKMGLDATHKWPGETSREWGRAIVKDEAVTRRIDELWSSLGID.

Residue N172 coordinates Mn(2+). Prenylated FMN is bound by residues 175–177 (IYR), 189–191 (RWL), and 194–195 (RG). A Mn(2+)-binding site is contributed by E238. Residue D287 is the Proton donor of the active site.

It belongs to the UbiD family. In terms of assembly, homohexamer. The cofactor is prenylated FMN. Mn(2+) serves as cofactor.

The protein localises to the cell membrane. It catalyses the reaction a 4-hydroxy-3-(all-trans-polyprenyl)benzoate + H(+) = a 2-(all-trans-polyprenyl)phenol + CO2. It participates in cofactor biosynthesis; ubiquinone biosynthesis. Catalyzes the decarboxylation of 3-octaprenyl-4-hydroxy benzoate to 2-octaprenylphenol, an intermediate step in ubiquinone biosynthesis. The protein is 3-octaprenyl-4-hydroxybenzoate carboxy-lyase of Pseudomonas paraeruginosa (strain DSM 24068 / PA7) (Pseudomonas aeruginosa (strain PA7)).